The following is a 245-amino-acid chain: tRNA pseudouridine synthase A (245 aa).

The active-site Nucleophile is Asp52. Tyr111 contacts substrate.

Belongs to the tRNA pseudouridine synthase TruA family. As to quaternary structure, homodimer.

The enzyme catalyses uridine(38/39/40) in tRNA = pseudouridine(38/39/40) in tRNA. In terms of biological role, formation of pseudouridine at positions 38, 39 and 40 in the anticodon stem and loop of transfer RNAs. The chain is tRNA pseudouridine synthase A from Rickettsia rickettsii (strain Iowa).